Reading from the N-terminus, the 501-residue chain is Bifunctional pantoate ligase/cytidylate kinase (501 aa).

Residues 1 to 264 are pantoate--beta-alanine ligase; sequence MLSTQAELAA…CGTTRLIDHS (264 aa). 25-32 contributes to the ATP binding site; it reads MGGLHQGH. H32 serves as the catalytic Proton donor. Residue Q55 participates in (R)-pantoate binding. Q55 contributes to the beta-alanine binding site. 144–147 is an ATP binding site; it reads GEKD. Q150 contacts (R)-pantoate. ATP-binding positions include V173 and 181–184; that span reads LSSR. Residues 265–501 are cytidylate kinase; that stretch reads FLMTRQPLVA…PEEAWPTPAG (237 aa).

It in the N-terminal section; belongs to the pantothenate synthetase family. This sequence in the C-terminal section; belongs to the cytidylate kinase family. Type 1 subfamily.

Its subcellular location is the cytoplasm. The catalysed reaction is (R)-pantoate + beta-alanine + ATP = (R)-pantothenate + AMP + diphosphate + H(+). The enzyme catalyses CMP + ATP = CDP + ADP. It catalyses the reaction dCMP + ATP = dCDP + ADP. It functions in the pathway cofactor biosynthesis; (R)-pantothenate biosynthesis; (R)-pantothenate from (R)-pantoate and beta-alanine: step 1/1. Catalyzes the condensation of pantoate with beta-alanine in an ATP-dependent reaction via a pantoyl-adenylate intermediate. In terms of biological role, catalyzes the transfer of a phosphate group from ATP to either CMP or dCMP to form CDP or dCDP and ADP, respectively. The chain is Bifunctional pantoate ligase/cytidylate kinase from Parasynechococcus marenigrum (strain WH8102).